We begin with the raw amino-acid sequence, 60 residues long: DNA-directed RNA polymerase subunit Rpo6 (60 aa).

The protein belongs to the archaeal Rpo6/eukaryotic RPB6 RNA polymerase subunit family. In terms of assembly, part of the RNA polymerase complex.

It localises to the cytoplasm. It catalyses the reaction RNA(n) + a ribonucleoside 5'-triphosphate = RNA(n+1) + diphosphate. DNA-dependent RNA polymerase (RNAP) catalyzes the transcription of DNA into RNA using the four ribonucleoside triphosphates as substrates. The chain is DNA-directed RNA polymerase subunit Rpo6 from Methanosarcina acetivorans (strain ATCC 35395 / DSM 2834 / JCM 12185 / C2A).